Consider the following 863-residue polypeptide: Leucine--tRNA ligase (863 aa).

The short motif at 42-52 (PYPSGKLHMGH) is the 'HIGH' region element. Positions 623-627 (KMSKS) match the 'KMSKS' region motif. Lys-626 contributes to the ATP binding site.

Belongs to the class-I aminoacyl-tRNA synthetase family.

Its subcellular location is the cytoplasm. It carries out the reaction tRNA(Leu) + L-leucine + ATP = L-leucyl-tRNA(Leu) + AMP + diphosphate. In Paraburkholderia xenovorans (strain LB400), this protein is Leucine--tRNA ligase.